The following is a 271-amino-acid chain: Structure-specific endonuclease subunit slx1 (271 aa).

A GIY-YIG domain is found at 5–87 (NFYCCYLLKS…QNLGISRYTK (83 aa)). Residues 180 to 231 (CNLCYECIESDELRANCPFTDCNSINHLTCLASSFLTEECQVLPIEGMCTKC) form an SLX1-type zinc finger.

It belongs to the SLX1 family. As to quaternary structure, forms a heterodimer with slx4. It depends on Mg(2+) as a cofactor. Mn(2+) serves as cofactor.

It localises to the nucleus. It is found in the nucleolus. Catalytic subunit of the slx1-slx4 structure-specific endonuclease that resolves DNA secondary structures generated during DNA repair and recombination. Has endonuclease activity towards branched DNA substrates, introducing single-strand cuts in duplex DNA close to junctions with ss-DNA. Has a preference for stem-loop (SL) and splayed arm Y structures. Introduces a single-strand cut in duplex DNA on the 3' side of a double-strand/single-strand junction with respect to the single-strand moving 3' to 5' away from the junction. Plays a critical role in maintaining the integrity of the ribosomal DNA (rDNA) loci, where it has a role in re-starting stalled replication forks. The complex initiates homologous recombination (HR) events, used to maintain rDNA copy number, in the rDNA repeats that are processed by a mechanism that requires rad22, but not rhp51. It is also required for suppression of methyl methanesulfonate (MMS) and UV-C irradiation hypersensitivity of the structural maintenance of chromosome (SMC) protein mutant, smc6-74, by overexpression of brc1. Has Holliday junction resolvase activity in vitro. This chain is Structure-specific endonuclease subunit slx1, found in Schizosaccharomyces pombe (strain 972 / ATCC 24843) (Fission yeast).